Consider the following 1231-residue polypeptide: Fanconi anemia group J protein homolog (1231 aa).

Residues 11 to 448 (GGVKILFPCR…SDHEPLRAVC (438 aa)) form the Helicase ATP-binding domain. Residue 46 to 53 (SPTGSGKS) coordinates ATP. 2 disordered regions span residues 104-126 (TFSSDRQMNSTDNAPSNISGASS) and 147-166 (QDDDFQTDRKRIRQSHDEQL). The span at 152 to 166 (QTDRKRIRQSHDEQL) shows a compositional bias: basic and acidic residues. Residues 155-173 (RKRIRQSHDEQLQARKRRC) carry the Nuclear localization signal motif. Cys291, Cys304, Cys316, and Cys356 together coordinate [4Fe-4S] cluster. The short motif at 399-402 (DEAH) is the DEAH box element. Polar residues predominate over residues 890–903 (SKNQQQRMQMSSTN). 3 disordered regions span residues 890 to 924 (SKNQQQRMQMSSTNCDDEPSQGTSSSSKNTSPTSS), 936 to 956 (VSEFTQPTSSTQSSVTSPPEI), and 1195 to 1231 (GNENAFNIGRNKGTEQKNRENRLSRSRNKGVSSFFLD). 2 stretches are compositionally biased toward low complexity: residues 909–924 (SQGTSSSSKNTSPTSS) and 940–954 (TQPTSSTQSSVTSPP). A compositionally biased stretch (basic and acidic residues) spans 1206-1217 (KGTEQKNRENRL).

Belongs to the DEAD box helicase family. DEAH subfamily. [4Fe-4S] cluster is required as a cofactor.

Its subcellular location is the nucleus. It catalyses the reaction Couples ATP hydrolysis with the unwinding of duplex DNA at the replication fork by translocating in the 5'-3' direction. This creates two antiparallel DNA single strands (ssDNA). The leading ssDNA polymer is the template for DNA polymerase III holoenzyme which synthesizes a continuous strand.. The catalysed reaction is ATP + H2O = ADP + phosphate + H(+). Its function is as follows. DNA-dependent helicase and 5' to 3' DNA helicase required for the maintenance of chromosomal stability. Involved in the repair of DNA double-strand breaks by homologous recombination. Involved in the repair of abasic sites at replication forks by promoting the degradation of DNA-protein cross-links: acts by catalyzing unfolding of HMCES DNA-protein cross-link via its helicase activity, exposing the underlying DNA and enabling cleavage of the DNA-protein adduct by the SPRTN metalloprotease. This chain is Fanconi anemia group J protein homolog (brip1.L), found in Xenopus laevis (African clawed frog).